The primary structure comprises 1715 residues: Rho guanine nucleotide exchange factor TIAM2 (1715 aa).

2 stretches are compositionally biased toward polar residues: residues 1-22 and 218-229; these read MGNS…TVTG and GSPSSQRPSPTD. Disordered regions lie at residues 1 to 27, 174 to 249, 263 to 294, and 385 to 418; these read MGNS…KQKP, FHNG…WYDS, SFLA…SSLS, and TGSL…NAEG. Gly-2 carries the N-myristoyl glycine lipid modification. The segment covering 235-245 has biased composition (low complexity); the sequence is SKGSSLSSESS. A compositionally biased stretch (basic and acidic residues) spans 395 to 411; that stretch reads LQEPRSMEGSEYFDSHS. Positions 504–618 constitute a PH 1 domain; it reads VVRKAGWLFF…WVTAIHSACA (115 aa). Residues 665 to 692 are a coiled coil; that stretch reads PKNRKAIENQIRQWEQNLEKFHMDLFRM. The RBD domain maps to 831–902; that stretch reads VQTYVHFQDN…YMQEQVYDEI (72 aa). The region spanning 911–997 is the PDZ domain; that stretch reads DVQLTKTGDM…GLTLVARPVT (87 aa). Residues 1092-1113 are disordered; the sequence is THTNSMEAPTESHDPPPRPLAR. Positions 1120–1314 constitute a DH domain; sequence RLRKVIQELV…EKVASHINEM (195 aa). Residues 1347–1478 form the PH 2 domain; sequence LLMHSTVSWL…KVIRSILREN (132 aa). The tract at residues 1515 to 1582 is disordered; that stretch reads SLKGLRTSSS…EGLAEFPDGL (68 aa). Residues 1522 to 1532 show a composition bias toward low complexity; that stretch reads SSSSEWPSEPS. The segment covering 1533–1552 has biased composition (polar residues); sequence KGNSLDSDECSLSSGTQSSG. The span at 1557–1572 shows a compositional bias: basic and acidic residues; that stretch reads ESRRDSKSTELEKDAQ. A Phosphoserine modification is found at Ser-1604. A Phosphothreonine modification is found at Thr-1662.

The protein belongs to the TIAM family. In terms of assembly, interacts with MAP1A, MAP1B, PARP1 and YWHAE. Interacts with CD44, PARD3 and MAPK8IP2. Post-translationally, phosphorylated on serine and threonine residues. Phosphorylated on Thr-1662 by Rho-kinase. Its phosphorylation by Rho-kinase inhibits its guanine nucleotide exchange activity, its interaction with MAP1A, MAP1B, PARP1 and YWHAE and reduces its ability to promote neurite growth. Expressed in fetal brain (at protein level). Expressed in the olfactory bulb, cortical plate of the cerebral cortex, caudate putamen, hippocampus, ependymal cells of the lateral surface of the lateral ventricles of the brain. Weakly expressed in heart, lung, liver, skeletal muscle, kidney and testis.

The protein resides in the cytoplasm. Its subcellular location is the cell projection. It localises to the lamellipodium. The protein localises to the filopodium. It is found in the growth cone. The protein resides in the neuron projection. Its subcellular location is the perikaryon. Functionally, modulates the activity of RHO-like proteins and connects extracellular signals to cytoskeletal activities. Acts as a GDP-dissociation stimulator protein that stimulates the GDP-GTP exchange activity of RHO-like GTPases and activates them. Activates specifically RAC1, but not CDC42 and RHOA. Mediates extracellular laminin signals to activate Rac1, contributing to neurite growth. Involved in lamellipodial formation and advancement of the growth cone of embryonic hippocampal neurons. Promotes migration of neurons in the cerebral cortex. When overexpressed, induces membrane ruffling accompanied by the accumulation of actin filaments along the altered plasma membrane. The chain is Rho guanine nucleotide exchange factor TIAM2 from Mus musculus (Mouse).